A 159-amino-acid polypeptide reads, in one-letter code: UPF0225 protein plu2503 (159 aa).

The protein belongs to the UPF0225 family.

The chain is UPF0225 protein plu2503 from Photorhabdus laumondii subsp. laumondii (strain DSM 15139 / CIP 105565 / TT01) (Photorhabdus luminescens subsp. laumondii).